The chain runs to 209 residues: Ribosomal RNA large subunit methyltransferase E (209 aa).

S-adenosyl-L-methionine contacts are provided by Gly-63, Trp-65, Asp-83, Asp-99, and Asp-124. The active-site Proton acceptor is Lys-164.

The protein belongs to the class I-like SAM-binding methyltransferase superfamily. RNA methyltransferase RlmE family.

It is found in the cytoplasm. It catalyses the reaction uridine(2552) in 23S rRNA + S-adenosyl-L-methionine = 2'-O-methyluridine(2552) in 23S rRNA + S-adenosyl-L-homocysteine + H(+). In terms of biological role, specifically methylates the uridine in position 2552 of 23S rRNA at the 2'-O position of the ribose in the fully assembled 50S ribosomal subunit. This chain is Ribosomal RNA large subunit methyltransferase E, found in Tolumonas auensis (strain DSM 9187 / NBRC 110442 / TA 4).